Here is a 577-residue protein sequence, read N- to C-terminus: Eukaryotic translation initiation factor 3 subunit D (577 aa).

Residues 103–177 (DSTKTRFGRG…KDYDKPQRNR (75 aa)) form a disordered region. A compositionally biased stretch (basic and acidic residues) spans 166–177 (GWKDYDKPQRNR). The interval 305-319 (TLDMVTVNENAADAP) is RNA gate. The tract at residues 558-577 (GSFEDDGEGDVIEENVEEED) is disordered. The segment covering 560–577 (FEDDGEGDVIEENVEEED) has biased composition (acidic residues).

The protein belongs to the eIF-3 subunit D family. As to quaternary structure, component of the eukaryotic translation initiation factor 3 (eIF-3) complex.

It localises to the cytoplasm. Functionally, mRNA cap-binding component of the eukaryotic translation initiation factor 3 (eIF-3) complex, which is involved in protein synthesis of a specialized repertoire of mRNAs and, together with other initiation factors, stimulates binding of mRNA and methionyl-tRNAi to the 40S ribosome. The eIF-3 complex specifically targets and initiates translation of a subset of mRNAs involved in cell proliferation. In the eIF-3 complex, eif3d specifically recognizes and binds the 7-methylguanosine cap of a subset of mRNAs. The chain is Eukaryotic translation initiation factor 3 subunit D from Sclerotinia sclerotiorum (strain ATCC 18683 / 1980 / Ss-1) (White mold).